An 896-amino-acid polypeptide reads, in one-letter code: Trehalose-phosphatase (896 aa).

Positions 1–554 are glycosyltransferase; it reads MTTTAQDNSP…SNDDMERKMT (554 aa).

This sequence in the N-terminal section; belongs to the glycosyltransferase 20 family. It in the C-terminal section; belongs to the trehalose phosphatase family. As to quaternary structure, the trehalose synthase complex is composed of the two catalytic subunits TPS1 and TPS2, and at least one of the two regulatory subunits TPS3 or TSL1. Mg(2+) serves as cofactor.

Its subcellular location is the cytoplasm. The enzyme catalyses alpha,alpha-trehalose 6-phosphate + H2O = alpha,alpha-trehalose + phosphate. It participates in carbohydrate biosynthesis. Inhibited by EDTA. Its function is as follows. Phosphatase catalytic subunit of the trehalose synthase complex that catalyzes the production of trehalose from glucose-6-phosphate and UDP-alpha-D-glucose in a two step process. The protein is Trehalose-phosphatase of Saccharomyces cerevisiae (strain ATCC 204508 / S288c) (Baker's yeast).